Here is a 372-residue protein sequence, read N- to C-terminus: MNNTEFYDRLGVSKNASADEIKKAYRKLSKKYHPDINKEPGAEDKYKEVQEAYETLSDDQKRAAYDQYGAAGANGGFGGFNGAGGFGGFEDIFSSFFGGGGSSRNPNAPRQGDDLQYRVNLTFEEAIFGTEKEVKYHREAGCRTCNGSGAKPGTSPVTCGRCHGAGVINVDTQTPLGMMRRQVTCDVCHGRGKEIKYPCTTCHGTGHEKQAHSVHVKIPAGVETGQQIRLAGQGEAGFNGGPYGDLYVVVSVEASDKFEREGTTIFYNLNLNFVQAALGDTVDIPTVHGDVELVIPEGTQTGKKFRLRSKGAPSLRGGAVGDQYVTVNVVTPTGLNDRQKVALKEFAAAGDLKVNPKKKGFFDHIKDAFDGE.

Residues 5-69 (EFYDRLGVSK…QKRAAYDQYG (65 aa)) form the J domain. The CR-type zinc-finger motif lies at 129 to 211 (GTEKEVKYHR…CHGTGHEKQA (83 aa)). Residues Cys142, Cys145, Cys159, Cys162, Cys185, Cys188, Cys199, and Cys202 each contribute to the Zn(2+) site. CXXCXGXG motif repeat units follow at residues 142–149 (CRTCNGSG), 159–166 (CGRCHGAG), 185–192 (CDVCHGRG), and 199–206 (CTTCHGTG).

The protein belongs to the DnaJ family. Homodimer. Zn(2+) serves as cofactor.

It is found in the cytoplasm. In terms of biological role, participates actively in the response to hyperosmotic and heat shock by preventing the aggregation of stress-denatured proteins and by disaggregating proteins, also in an autonomous, DnaK-independent fashion. Unfolded proteins bind initially to DnaJ; upon interaction with the DnaJ-bound protein, DnaK hydrolyzes its bound ATP, resulting in the formation of a stable complex. GrpE releases ADP from DnaK; ATP binding to DnaK triggers the release of the substrate protein, thus completing the reaction cycle. Several rounds of ATP-dependent interactions between DnaJ, DnaK and GrpE are required for fully efficient folding. Also involved, together with DnaK and GrpE, in the DNA replication of plasmids through activation of initiation proteins. The chain is Chaperone protein DnaJ from Streptococcus pneumoniae (strain ATCC BAA-255 / R6).